The sequence spans 146 residues: uncharacterized protein (146 aa).

Positions 1 to 120 (MTDKFDANDE…TILKWEKNMD (120 aa)) constitute an N-acetyltransferase domain.

It belongs to the acetyltransferase family.

This is an uncharacterized protein from Streptococcus pyogenes serotype M6 (strain ATCC BAA-946 / MGAS10394).